The chain runs to 436 residues: Trigger factor (436 aa).

In terms of domain architecture, PPIase FKBP-type spans 163 to 248 (GDRVTVDFEG…VKKIEAANLP (86 aa)).

Belongs to the FKBP-type PPIase family. Tig subfamily.

The protein resides in the cytoplasm. It catalyses the reaction [protein]-peptidylproline (omega=180) = [protein]-peptidylproline (omega=0). Involved in protein export. Acts as a chaperone by maintaining the newly synthesized protein in an open conformation. Functions as a peptidyl-prolyl cis-trans isomerase. The sequence is that of Trigger factor from Delftia acidovorans (strain DSM 14801 / SPH-1).